The primary structure comprises 653 residues: Modification methylase StsI (653 aa).

It belongs to the N(4)/N(6)-methyltransferase family. As to quaternary structure, monomer.

The catalysed reaction is a 2'-deoxyadenosine in DNA + S-adenosyl-L-methionine = an N(6)-methyl-2'-deoxyadenosine in DNA + S-adenosyl-L-homocysteine + H(+). In terms of biological role, an alpha subtype methylase that recognizes the double-stranded sequence 5'-GGATG-3' in one strand and 3'-CATCC-5' in the other, methylates A of both strands, and protects the DNA from cleavage by the StsI endonuclease. The 2 domains of the protein participate in modification of the two strands. This Streptococcus sanguinis protein is Modification methylase StsI (stsIM).